A 411-amino-acid chain; its full sequence is Carbohydrate sulfotransferase 1 (411 aa).

A topological domain (cytoplasmic) is located at residue M1. The helical; Signal-anchor for type II membrane protein transmembrane segment at 2–23 (QCSWKAVLLLALASIAIQYTAI) threads the bilayer. Topologically, residues 24–411 (RTFTAKSFHT…VEERDFRPFL (388 aa)) are lumenal. N56 is a glycosylation site (N-linked (GlcNAc...) asparagine). 69-75 (TRSGSSF) provides a ligand contact to 3'-phosphoadenylyl sulfate. Residues N145 and N189 are each glycosylated (N-linked (GlcNAc...) asparagine). Residue 234 to 242 (RDPRGILAS) coordinates 3'-phosphoadenylyl sulfate. A glycan (N-linked (GlcNAc...) asparagine) is linked at N334. Residues 337–339 (RGD) carry the Cell attachment site motif.

It belongs to the sulfotransferase 1 family. Gal/GlcNAc/GalNAc subfamily.

Its subcellular location is the golgi apparatus membrane. It catalyses the reaction 3'-phosphoadenylyl sulfate + keratan = adenosine 3',5'-bisphosphate + keratan 6'-sulfate.. It participates in glycan metabolism. In terms of biological role, sulfotransferase that utilizes 3'-phospho-5'-adenylyl sulfate (PAPS) as sulfonate donor to catalyze the transfer of sulfate to position 6 of internal galactose (Gal) residues of keratan. Cooperates with B4GALT4 and B3GNT7 glycosyltransferases and CHST6 sulfotransferase to construct and elongate disulfated disaccharide unit [-&gt;3(6-sulfoGalbeta)1-&gt;4(6-sulfoGlcNAcbeta)1-&gt;] within keratan sulfate polymer. Has a preference for sulfating keratan sulfate, but it also transfers sulfate to the unsulfated polymer. Involved in biosynthesis of phosphacan, a major keratan sulfate proteoglycan in the developing brain. Involved in biosynthesis of 6-sulfoGalbeta-containing O-linked glycans in high endothelial venules of lymph nodes. May act in a synergistic manner with CHST4 to generate sialyl 6',6-disulfo Lewis X motif, a recognition determinant for immune cell receptors implicated in leukocyte trafficking. Catalyzes sulfation of N-acetyllactosamine (LacNAc) oligosaccharides with highest efficiency for sialylated LacNAc structures. The polypeptide is Carbohydrate sulfotransferase 1 (Chst1) (Rattus norvegicus (Rat)).